The sequence spans 294 residues: Proteasome subunit beta (294 aa).

Positions 1-65 (MTADRPALRT…MESGDLAPHG (65 aa)) are cleaved as a propeptide — removed in mature form; by autocatalysis. Catalysis depends on threonine 66, which acts as the Nucleophile.

It belongs to the peptidase T1B family. As to quaternary structure, the 20S proteasome core is composed of 14 alpha and 14 beta subunits that assemble into four stacked heptameric rings, resulting in a barrel-shaped structure. The two inner rings, each composed of seven catalytic beta subunits, are sandwiched by two outer rings, each composed of seven alpha subunits. The catalytic chamber with the active sites is on the inside of the barrel. Has a gated structure, the ends of the cylinder being occluded by the N-termini of the alpha-subunits. Is capped by the proteasome-associated ATPase, ARC.

The protein resides in the cytoplasm. It catalyses the reaction Cleavage of peptide bonds with very broad specificity.. Its pathway is protein degradation; proteasomal Pup-dependent pathway. With respect to regulation, the formation of the proteasomal ATPase ARC-20S proteasome complex, likely via the docking of the C-termini of ARC into the intersubunit pockets in the alpha-rings, may trigger opening of the gate for substrate entry. Interconversion between the open-gate and close-gate conformations leads to a dynamic regulation of the 20S proteasome proteolysis activity. Functionally, component of the proteasome core, a large protease complex with broad specificity involved in protein degradation. The polypeptide is Proteasome subunit beta (Rhodococcus opacus (strain B4)).